The following is a 258-amino-acid chain: GTP cyclohydrolase FolE2 (258 aa).

It belongs to the GTP cyclohydrolase IV family.

It carries out the reaction GTP + H2O = 7,8-dihydroneopterin 3'-triphosphate + formate + H(+). Its pathway is cofactor biosynthesis; 7,8-dihydroneopterin triphosphate biosynthesis; 7,8-dihydroneopterin triphosphate from GTP: step 1/1. Its function is as follows. Converts GTP to 7,8-dihydroneopterin triphosphate. This is GTP cyclohydrolase FolE2 from Geobacter sulfurreducens (strain ATCC 51573 / DSM 12127 / PCA).